The primary structure comprises 188 residues: Elongation factor P (188 aa).

An N6-(3,6-diaminohexanoyl)-5-hydroxylysine modification is found at K34.

The protein belongs to the elongation factor P family. Post-translationally, is beta-lysylated on the epsilon-amino group of Lys-34 by the combined action of EpmA and EpmB, and then hydroxylated on the C5 position of the same residue by EpmC. Lysylation is critical for the stimulatory effect of EF-P on peptide-bond formation. The lysylation moiety would extend toward the peptidyltransferase center and stabilize the terminal 3-CCA end of the tRNA. The hydroxylation of the C5 position on Lys-34 would allow additional potential stabilizing hydrogen-bond interactions with the P-tRNA.

The protein localises to the cytoplasm. It participates in protein biosynthesis; polypeptide chain elongation. In terms of biological role, involved in peptide bond synthesis. Alleviates ribosome stalling that occurs when 3 or more consecutive Pro residues or the sequence PPG is present in a protein, possibly by augmenting the peptidyl transferase activity of the ribosome. Modification of Lys-34 is required for alleviation. The protein is Elongation factor P of Shigella boydii serotype 18 (strain CDC 3083-94 / BS512).